The chain runs to 159 residues: Cyclic pyranopterin monophosphate synthase (159 aa).

Residues 75–77 (LCH) and 113–114 (ME) contribute to the substrate site. Residue Asp-128 is part of the active site.

This sequence belongs to the MoaC family. In terms of assembly, homohexamer; trimer of dimers.

It catalyses the reaction (8S)-3',8-cyclo-7,8-dihydroguanosine 5'-triphosphate = cyclic pyranopterin phosphate + diphosphate. It participates in cofactor biosynthesis; molybdopterin biosynthesis. Its function is as follows. Catalyzes the conversion of (8S)-3',8-cyclo-7,8-dihydroguanosine 5'-triphosphate to cyclic pyranopterin monophosphate (cPMP). The protein is Cyclic pyranopterin monophosphate synthase of Vibrio atlanticus (strain LGP32) (Vibrio splendidus (strain Mel32)).